The sequence spans 472 residues: Adenylyl cyclase-associated protein 1 (472 aa).

The residue at position 2 (A2) is an N-acetylalanine. Position 31 is a phosphotyrosine (Y31). S34 is subject to Phosphoserine. K81 is subject to N6-acetyllysine. The interval E216–S253 is disordered. Positions S218–S228 are enriched in low complexity. Over residues G229–P243 the composition is skewed to pro residues. A compositionally biased stretch (low complexity) spans T244–S253. At K287 the chain carries N6-methyllysine. S290, S295, and S301 each carry phosphoserine. The tract at residues S290–A312 is disordered. In terms of domain architecture, C-CAP/cofactor C-like spans P307–V450. K345 is covalently cross-linked (Glycyl lysine isopeptide (Lys-Gly) (interchain with G-Cter in SUMO1)).

Belongs to the CAP family. Homodimer. Binds actin monomers.

Its subcellular location is the cell membrane. Its function is as follows. Directly regulates filament dynamics and has been implicated in a number of complex developmental and morphological processes, including mRNA localization and the establishment of cell polarity. The sequence is that of Adenylyl cyclase-associated protein 1 (CAP1) from Bos taurus (Bovine).